A 270-amino-acid chain; its full sequence is Phosphonates import ATP-binding protein PhnC 2 (270 aa).

The 244-residue stretch at 2–245 (LVVEGLTCRF…IARELYDLEA (244 aa)) folds into the ABC transporter domain. 34 to 41 (GRSGAGKS) is an ATP binding site.

Belongs to the ABC transporter superfamily. Phosphonates importer (TC 3.A.1.9.1) family. In terms of assembly, the complex is composed of two ATP-binding proteins (PhnC), two transmembrane proteins (PhnE) and a solute-binding protein (PhnD).

It is found in the cell inner membrane. The enzyme catalyses phosphonate(out) + ATP + H2O = phosphonate(in) + ADP + phosphate + H(+). Functionally, part of the ABC transporter complex PhnCDE involved in phosphonates import. Responsible for energy coupling to the transport system. The protein is Phosphonates import ATP-binding protein PhnC 2 of Rhodopseudomonas palustris (strain BisA53).